The chain runs to 444 residues: Zinc protease PqqE (444 aa).

Residues 1 to 28 form the signal peptide; sequence MKHFSVKRLLGLSSVLLVTLGASMHAQS. Residue His-78 participates in Zn(2+) binding. Glu-81 (proton acceptor) is an active-site residue. Zn(2+)-binding residues include His-82 and Glu-158.

This sequence belongs to the peptidase M16 family. Zn(2+) serves as cofactor.

Its subcellular location is the secreted. With respect to regulation, can function alone, but full activity requires the presence of the non-peptidase homolog YmxG. In terms of biological role, virulence factor that cleaves the cytoplasmic domain of the human junctional adhesion molecule A (JAM-A), compromising gastric epithelial barrier function and cell-cell adhesion. Cleavage of JAM-A occurs after Ala-285 or, to a lesser extent, before Ala-285. The chain is Zinc protease PqqE from Helicobacter pylori (strain ATCC 700392 / 26695) (Campylobacter pylori).